Consider the following 588-residue polypeptide: Aspartate--tRNA ligase (588 aa).

Glu-174 serves as a coordination point for L-aspartate. Residues 198-201 are aspartate; that stretch reads QLFK. L-aspartate is bound at residue Arg-220. Residues 220-222 and Gln-229 contribute to the ATP site; that span reads RDE. His-448 contributes to the L-aspartate binding site. An ATP-binding site is contributed by Glu-482. Arg-489 is an L-aspartate binding site. 534–537 serves as a coordination point for ATP; the sequence is GIDR.

The protein belongs to the class-II aminoacyl-tRNA synthetase family. Type 1 subfamily. Homodimer.

It is found in the cytoplasm. The enzyme catalyses tRNA(Asp) + L-aspartate + ATP = L-aspartyl-tRNA(Asp) + AMP + diphosphate. Its function is as follows. Catalyzes the attachment of L-aspartate to tRNA(Asp) in a two-step reaction: L-aspartate is first activated by ATP to form Asp-AMP and then transferred to the acceptor end of tRNA(Asp). The sequence is that of Aspartate--tRNA ligase from Xanthomonas campestris pv. campestris (strain 8004).